A 103-amino-acid chain; its full sequence is Co-chaperonin GroES (103 aa).

The protein belongs to the GroES chaperonin family. As to quaternary structure, heptamer of 7 subunits arranged in a ring. Interacts with the chaperonin GroEL.

It is found in the cytoplasm. In terms of biological role, together with the chaperonin GroEL, plays an essential role in assisting protein folding. The GroEL-GroES system forms a nano-cage that allows encapsulation of the non-native substrate proteins and provides a physical environment optimized to promote and accelerate protein folding. GroES binds to the apical surface of the GroEL ring, thereby capping the opening of the GroEL channel. This Synechococcus sp. (strain CC9605) protein is Co-chaperonin GroES.